A 166-amino-acid polypeptide reads, in one-letter code: Phosphopantetheine adenylyltransferase (166 aa).

Ser-11 is a substrate binding site. Residues 11 to 12 (SF) and His-19 contribute to the ATP site. Substrate is bound by residues Lys-43, Ala-76, and Arg-90. Residues 91–93 (GLR), Glu-101, and 126–132 (LQPISSS) each bind ATP.

This sequence belongs to the bacterial CoaD family. In terms of assembly, homohexamer. Requires Mg(2+) as cofactor.

The protein localises to the cytoplasm. It catalyses the reaction (R)-4'-phosphopantetheine + ATP + H(+) = 3'-dephospho-CoA + diphosphate. It participates in cofactor biosynthesis; coenzyme A biosynthesis; CoA from (R)-pantothenate: step 4/5. Its function is as follows. Reversibly transfers an adenylyl group from ATP to 4'-phosphopantetheine, yielding dephospho-CoA (dPCoA) and pyrophosphate. This chain is Phosphopantetheine adenylyltransferase, found in Streptococcus equi subsp. zooepidemicus (strain MGCS10565).